Reading from the N-terminus, the 606-residue chain is Elongation factor 4 (606 aa).

Residues 11–193 (PHIRNFSIIA…RLVRDVPPPK (183 aa)) form the tr-type G domain. Residues 23 to 28 (DHGKST) and 140 to 143 (NKMD) contribute to the GTP site.

It belongs to the TRAFAC class translation factor GTPase superfamily. Classic translation factor GTPase family. LepA subfamily.

The protein localises to the cell inner membrane. It carries out the reaction GTP + H2O = GDP + phosphate + H(+). Required for accurate and efficient protein synthesis under certain stress conditions. May act as a fidelity factor of the translation reaction, by catalyzing a one-codon backward translocation of tRNAs on improperly translocated ribosomes. Back-translocation proceeds from a post-translocation (POST) complex to a pre-translocation (PRE) complex, thus giving elongation factor G a second chance to translocate the tRNAs correctly. Binds to ribosomes in a GTP-dependent manner. In Chromohalobacter salexigens (strain ATCC BAA-138 / DSM 3043 / CIP 106854 / NCIMB 13768 / 1H11), this protein is Elongation factor 4.